The following is an 83-amino-acid chain: Alpha-neurotoxin NTX-3 (83 aa).

The first 21 residues, 1–21 (MKTLLLTLLVVTIVCLDLGYT), serve as a signal peptide directing secretion. Disulfide bonds link cysteine 24/cysteine 45, cysteine 38/cysteine 62, cysteine 64/cysteine 75, and cysteine 76/cysteine 81.

It belongs to the three-finger toxin family. Short-chain subfamily. Type I alpha-neurotoxin sub-subfamily. In terms of tissue distribution, expressed by the venom gland.

It is found in the secreted. Functionally, binds to muscle nicotinic acetylcholine receptor (nAChR) and inhibit acetylcholine from binding to the receptor, thereby impairing neuromuscular transmission. This chain is Alpha-neurotoxin NTX-3, found in Naja sputatrix (Malayan spitting cobra).